Here is a 244-residue protein sequence, read N- to C-terminus: Type III pantothenate kinase (244 aa).

An ATP-binding site is contributed by 7–14 (DIGNTRLK). Substrate-binding positions include Y95 and 102–105 (GIDR). Catalysis depends on D104, which acts as the Proton acceptor. T126 provides a ligand contact to ATP. T177 is a binding site for substrate.

This sequence belongs to the type III pantothenate kinase family. In terms of assembly, homodimer. NH4(+) is required as a cofactor. K(+) serves as cofactor.

Its subcellular location is the cytoplasm. The catalysed reaction is (R)-pantothenate + ATP = (R)-4'-phosphopantothenate + ADP + H(+). It functions in the pathway cofactor biosynthesis; coenzyme A biosynthesis; CoA from (R)-pantothenate: step 1/5. Its function is as follows. Catalyzes the phosphorylation of pantothenate (Pan), the first step in CoA biosynthesis. This Acinetobacter baumannii (strain AB307-0294) protein is Type III pantothenate kinase.